The primary structure comprises 126 residues: uncharacterized protein (126 aa).

This is an uncharacterized protein from Rickettsia prowazekii (strain Madrid E).